Reading from the N-terminus, the 76-residue chain is Tautomerase PptA (76 aa).

Residue Pro2 is the Proton acceptor; via imino nitrogen of the active site.

This sequence belongs to the 4-oxalocrotonate tautomerase family. PptA subfamily. In terms of assembly, homodimer.

It localises to the cytoplasm. The protein is Tautomerase PptA of Cronobacter sakazakii (strain ATCC BAA-894) (Enterobacter sakazakii).